The primary structure comprises 432 residues: G-protein coupled receptor 22 (432 aa).

The Extracellular segment spans residues 1–45 (MCFSPVLEINMQSESNVTVRDDIDDIDTNMYQPLSYPLSFQVSLT). Asn-16 carries an N-linked (GlcNAc...) asparagine glycan. A helical membrane pass occupies residues 46 to 66 (GFLMLEIVLGLGSNLTVLVLY). The Cytoplasmic segment spans residues 67-85 (CMKSNLINSVSNIITMNLH). Residues 86–106 (VLDVIICVGCIPLTIVILLLS) form a helical membrane-spanning segment. At 107–115 (LESNTALIC) the chain is on the extracellular side. The chain crosses the membrane as a helical span at residues 116–136 (CFHEACVSFASVSTAINVFAI). The Cytoplasmic segment spans residues 137–156 (TLDRYDISVKPANRILTMGR). Residues 157-177 (AVMLMTSIWIFSFFSFLIPFI) traverse the membrane as a helical segment. The Extracellular portion of the chain corresponds to 178–208 (EVNFFSLQSGNTWANKTLLCVSTSEYYTELG). N-linked (GlcNAc...) asparagine glycosylation is present at Asn-192. Residues 209–229 (MYYHLLVQIPIFFFTVIVMLI) traverse the membrane as a helical segment. At 230 to 314 (TYTKILQALN…ERQKRVFKMS (85 aa)) the chain is on the cytoplasmic side. Residues 315 to 335 (LLIISTFLLCWTPISVLNTTI) traverse the membrane as a helical segment. The Extracellular segment spans residues 336-348 (LCLGPSDLLVKLR). A helical transmembrane segment spans residues 349–369 (LCFLVMAYGTTIFHPLLYAFT). Residues 370 to 432 (RQKFQKVLKS…KCLVPQVVTD (63 aa)) lie on the Cytoplasmic side of the membrane.

This sequence belongs to the G-protein coupled receptor 1 family. In terms of tissue distribution, abundant levels detected in the brain and heart and no detectable expression in other peripheral tissues.

The protein localises to the cell membrane. Orphan G-protein coupled receptor. Seems to act through a G(i)/G(o) mediated pathway. May be involved in ciliogenesis. In Mus musculus (Mouse), this protein is G-protein coupled receptor 22 (Gpr22).